Reading from the N-terminus, the 331-residue chain is UPF0194 membrane protein YbhG (331 aa).

Residues 1–19 (MKKPVVIGLAIAAIVAVIA) form the signal peptide. Residues 107–208 (EEIAQAAAAV…LDLQDTTLIA (102 aa)) are a coiled coil.

The protein belongs to the UPF0194 family.

It localises to the periplasm. In Salmonella gallinarum (strain 287/91 / NCTC 13346), this protein is UPF0194 membrane protein YbhG.